Here is a 131-residue protein sequence, read N- to C-terminus: Fluoride-specific ion channel FluC 2 (131 aa).

4 helical membrane passes run 5 to 25, 35 to 55, 59 to 79, and 95 to 115; these read SAVF…NLWI, WLEN…FMIG, PLLS…MSTF, and LLYV…GVFV. Na(+) contacts are provided by G71 and T74.

Belongs to the fluoride channel Fluc/FEX (TC 1.A.43) family.

The protein localises to the cell membrane. The enzyme catalyses fluoride(in) = fluoride(out). With respect to regulation, na(+) is not transported, but it plays an essential structural role and its presence is essential for fluoride channel function. Functionally, fluoride-specific ion channel. Important for reducing fluoride concentration in the cell, thus reducing its toxicity. In Bacillus subtilis (strain 168), this protein is Fluoride-specific ion channel FluC 2.